Consider the following 889-residue polypeptide: Cytoplasmic aconitate hydratase (889 aa).

Substrate-binding positions include glutamine 86 and 205–207; that span reads DSH. Residues cysteine 437, cysteine 503, and cysteine 506 each contribute to the [4Fe-4S] cluster site. Residues arginine 536, arginine 541, arginine 699, and 779–780 contribute to the substrate site; that span reads SR.

This sequence belongs to the aconitase/IPM isomerase family. In terms of assembly, interacts (when associated with the 4Fe-4S) with FBXL5. Interacts with frataxin(81-210). Requires [4Fe-4S] cluster as cofactor.

It is found in the cytoplasm. The protein resides in the cytosol. It catalyses the reaction citrate = D-threo-isocitrate. Bifunctional iron sensor that switches between 2 activities depending on iron availability. Iron deprivation, promotes its mRNA binding activity through which it regulates the expression of genes involved in iron uptake, sequestration and utilization. Binds to iron-responsive elements (IRES) in the untranslated region of target mRNAs preventing for instance the translation of ferritin and aminolevulinic acid synthase and stabilizing the transferrin receptor mRNA. Its function is as follows. Conversely, when cellular iron levels are high, binds a 4Fe-4S cluster which precludes RNA binding activity and promotes the aconitase activity, the isomerization of citrate to isocitrate via cis-aconitate. This is Cytoplasmic aconitate hydratase (Aco1) from Rattus norvegicus (Rat).